The sequence spans 367 residues: Eukaryotic translation initiation factor 3 subunit H (367 aa).

Residues 14–166 (VQVEALVVMK…LRAFRLSPNF (153 aa)) enclose the MPN domain.

Belongs to the eIF-3 subunit H family. Component of the eukaryotic translation initiation factor 3 (eIF-3) complex.

The protein localises to the cytoplasm. Functionally, component of the eukaryotic translation initiation factor 3 (eIF-3) complex, which is involved in protein synthesis of a specialized repertoire of mRNAs and, together with other initiation factors, stimulates binding of mRNA and methionyl-tRNAi to the 40S ribosome. The eIF-3 complex specifically targets and initiates translation of a subset of mRNAs involved in cell proliferation. The chain is Eukaryotic translation initiation factor 3 subunit H from Sclerotinia sclerotiorum (strain ATCC 18683 / 1980 / Ss-1) (White mold).